We begin with the raw amino-acid sequence, 414 residues long: Multifunctional CCA protein (414 aa).

Residues glycine 8 and arginine 11 each coordinate ATP. The CTP site is built by glycine 8 and arginine 11. Mg(2+) is bound by residues glutamate 21 and aspartate 23. Residues arginine 91, arginine 137, and arginine 140 each contribute to the ATP site. CTP is bound by residues arginine 91, arginine 137, and arginine 140. In terms of domain architecture, HD spans 228–329; it reads TGIHTMMTVA…LKLFDAIDVW (102 aa).

Belongs to the tRNA nucleotidyltransferase/poly(A) polymerase family. Bacterial CCA-adding enzyme type 1 subfamily. In terms of assembly, monomer. Can also form homodimers and oligomers. Mg(2+) serves as cofactor. The cofactor is Ni(2+).

It catalyses the reaction a tRNA precursor + 2 CTP + ATP = a tRNA with a 3' CCA end + 3 diphosphate. It carries out the reaction a tRNA with a 3' CCA end + 2 CTP + ATP = a tRNA with a 3' CCACCA end + 3 diphosphate. In terms of biological role, catalyzes the addition and repair of the essential 3'-terminal CCA sequence in tRNAs without using a nucleic acid template. Adds these three nucleotides in the order of C, C, and A to the tRNA nucleotide-73, using CTP and ATP as substrates and producing inorganic pyrophosphate. tRNA 3'-terminal CCA addition is required both for tRNA processing and repair. Also involved in tRNA surveillance by mediating tandem CCA addition to generate a CCACCA at the 3' terminus of unstable tRNAs. While stable tRNAs receive only 3'-terminal CCA, unstable tRNAs are marked with CCACCA and rapidly degraded. The protein is Multifunctional CCA protein of Pectobacterium atrosepticum (strain SCRI 1043 / ATCC BAA-672) (Erwinia carotovora subsp. atroseptica).